The sequence spans 273 residues: Non-homologous end joining protein Ku (273 aa).

Positions 10–193 (AFGLVNVPVK…KVEIKPAELK (184 aa)) constitute a Ku domain. Positions 111-273 (FLEPDSKSSK…KANSNVPTPP (163 aa)) are sufficient for interaction with LigD.

Belongs to the prokaryotic Ku family. Homodimer. Interacts with LigD.

Its function is as follows. With LigD forms a non-homologous end joining (NHEJ) DNA repair enzyme, which repairs dsDNA breaks with reduced fidelity. Binds linear dsDNA with 5'- and 3'- overhangs but not closed circular dsDNA nor ssDNA. Recruits and stimulates the ligase activity of LigD. This Mycobacterium tuberculosis (strain CDC 1551 / Oshkosh) protein is Non-homologous end joining protein Ku (mku).